Consider the following 644-residue polypeptide: Keratin, type II cytoskeletal 1 (644 aa).

The segment at 2–179 (SRQFSSRSGY…DPEIQKVKSR (178 aa)) is head. Arg12 is subject to Omega-N-methylarginine. Phosphoserine is present on residues Ser18 and Ser21. A compositionally biased stretch (low complexity) spans 22-38 (AGIINYQRRTTSSSTRR). The segment at 22–47 (AGIINYQRRTTSSSTRRSGGGGGRFS) is disordered. Arg45 carries the post-translational modification Omega-N-methylarginine. The residue at position 66 (Ser66) is a Phosphoserine. At Arg82 the chain carries Omega-N-methylarginine. Residues 180–215 (EREQIKSLNNQFASFIDKVRFLEQQNQVLQTKWELL) are coil 1A. Residues 180 to 493 (EREQIKSLNN…TLLEGEESRM (314 aa)) enclose the IF rod domain. Positions 216–234 (QQVDTSTRTHNLEPYFESF) are linker 1. The tract at residues 235-326 (INNLRRRVDQ…ALYQAELSQM (92 aa)) is coil 1B. Lys276 carries the post-translational modification N6,N6-dimethyllysine. Residues 327–350 (QTQISETNVILSMDNNRSLDLDSI) form a linker 12 region. Ser344 carries the post-translational modification Phosphoserine. The tract at residues 351 to 489 (IAEVKAQYED…ATYRTLLEGE (139 aa)) is coil 2. 2 disordered regions span residues 489–523 (EESR…GGGG) and 568–644 (SGGG…GVTR). The tract at residues 490 to 644 (ESRMSGECAP…VSTTYSGVTR (155 aa)) is tail. Over residues 501–511 (VSVSVSTSHTT) the composition is skewed to low complexity. Gly residues-rich tracts occupy residues 513–523 (SGGGSRGGGGG) and 568–620 (SGGG…GSSS). Arg518 and Arg588 each carry omega-N-methylarginine. Residues 621 to 631 (GGVKSSGGSSS) are compositionally biased toward low complexity. The span at 632 to 644 (VKFVSTTYSGVTR) shows a compositional bias: polar residues.

This sequence belongs to the intermediate filament family. In terms of assembly, heterotetramer of two type I and two type II keratins. Heterodimer with KRT10. Two heterodimers of KRT1 and KRT10 form a heterotetramer. Forms a heterodimer with KRT14; the interaction is more abundant in the absence of KRT5. Interacts with PLEC isoform 1C, when in a heterodimer with KRT10. Interacts with ITGB1 in the presence of RACK1 and SRC, and with RACK1. Interacts with C1QBP; the association represents a cell surface kininogen receptor. Interacts with EPPK1; interaction is dependent of higher-order structure of intermediate filament. In terms of processing, undergoes deimination of some arginine residues (citrullination). The source of this protein is neonatal foreskin. The 67-kDa type II keratins are expressed in terminally differentiating epidermis.

Its subcellular location is the cell membrane. It is found in the cytoplasm. Functionally, may regulate the activity of kinases such as PKC and SRC via binding to integrin beta-1 (ITB1) and the receptor of activated protein C kinase 1 (RACK1). In complex with C1QBP is a high affinity receptor for kininogen-1/HMWK. This chain is Keratin, type II cytoskeletal 1 (KRT1), found in Homo sapiens (Human).